A 213-amino-acid chain; its full sequence is FMN-dependent NADH:quinone oxidoreductase (213 aa).

Belongs to the azoreductase type 1 family. As to quaternary structure, homodimer. FMN serves as cofactor.

The enzyme catalyses 2 a quinone + NADH + H(+) = 2 a 1,4-benzosemiquinone + NAD(+). It catalyses the reaction N,N-dimethyl-1,4-phenylenediamine + anthranilate + 2 NAD(+) = 2-(4-dimethylaminophenyl)diazenylbenzoate + 2 NADH + 2 H(+). Its function is as follows. Quinone reductase that provides resistance to thiol-specific stress caused by electrophilic quinones. Also exhibits azoreductase activity. Catalyzes the reductive cleavage of the azo bond in aromatic azo compounds to the corresponding amines. This chain is FMN-dependent NADH:quinone oxidoreductase, found in Streptococcus agalactiae serotype III (strain NEM316).